The following is a 176-amino-acid chain: Alkyl hydroperoxide reductase AhpD (176 aa).

The active-site Proton donor is the Cys131. A disulfide bridge links Cys131 with Cys134. The active-site Cysteine sulfenic acid (-SOH) intermediate is Cys134.

This sequence belongs to the AhpD family.

It carries out the reaction N(6)-[(R)-dihydrolipoyl]-L-lysyl-[lipoyl-carrier protein] + a hydroperoxide = N(6)-[(R)-lipoyl]-L-lysyl-[lipoyl-carrier protein] + an alcohol + H2O. In terms of biological role, antioxidant protein with alkyl hydroperoxidase activity. Required for the reduction of the AhpC active site cysteine residues and for the regeneration of the AhpC enzyme activity. In Methylobacterium sp. (strain 4-46), this protein is Alkyl hydroperoxide reductase AhpD.